The chain runs to 476 residues: MKFNIAKKGGVVAQLVFEEKIEGGYLNHLKEKELFSGKAEDVYYTLDSNLKAQLFIGLGKEEKIDLEVLRKTFFKAASELLKNKVEEVELNIPKLNNLCNYKTAEAIAEGMLHATYKYDKFKSDRKEQTEITVNYNPEKGKEDRAEKGINEAVKLMEAVFLTRDLVNQPANVIYPETLAKIAKEKLEAKGVKVTVHGKKEIEALKMEAFLNVARASTKEPKLIVMEYYNNPGSNEKIALVGKGLTYDSGGYAIKPATSMVDMFTDMGGSGTVIGAMHALADLKAKVNVVAVVASCENMISGDGYRNGDIIGSMSGKTIEIINTDAEGRLTLADAVYYATNNLGATKLIDLATLTGACVSALGEQVSGAVTNNDEFFSELVKANERAGEIVWRMPTIEYYKKMNESKVADLKNSGGKLGGMMTAGLFVGSFLAKEDIPWIHIDIAGTAYITEKFGYLKENATGTLVKSLYYMLSKEA.

Mn(2+) contacts are provided by K242 and D247. Residue K254 is part of the active site. Residues D265, D324, and E326 each coordinate Mn(2+). R328 is an active-site residue.

This sequence belongs to the peptidase M17 family. Mn(2+) is required as a cofactor.

It is found in the cytoplasm. The enzyme catalyses Release of an N-terminal amino acid, Xaa-|-Yaa-, in which Xaa is preferably Leu, but may be other amino acids including Pro although not Arg or Lys, and Yaa may be Pro. Amino acid amides and methyl esters are also readily hydrolyzed, but rates on arylamides are exceedingly low.. The catalysed reaction is Release of an N-terminal amino acid, preferentially leucine, but not glutamic or aspartic acids.. In terms of biological role, presumably involved in the processing and regular turnover of intracellular proteins. Catalyzes the removal of unsubstituted N-terminal amino acids from various peptides. In Treponema denticola (strain ATCC 35405 / DSM 14222 / CIP 103919 / JCM 8153 / KCTC 15104), this protein is Probable cytosol aminopeptidase.